The primary structure comprises 151 residues: Calcium-binding protein SPEC 2C (151 aa).

4 consecutive EF-hand domains span residues 10-45 (EQRK…IEIE), 46-78 (LTQE…KAEQ), 81-116 (GKGA…CTDP), and 118-151 (MTKE…QSSY). Ca(2+) is bound by residues D23, D25, D27, K29, E34, D59, D61, S63, E70, D94, D96, S98, S100, E105, D131, D135, E137, and E142.

In terms of tissue distribution, found in cell lineages giving rise to the aboral ectoderm, a squamous epithelium covering the surface of the late stage embryo and larva.

Its function is as follows. Calcium-binding protein involved in larval development and metamorphosis. Likely to function as calcium buffers mediating the transport of calcium from the sea water to the blastocoel where calcium is required for skeleton formation. The polypeptide is Calcium-binding protein SPEC 2C (SPEC2C) (Strongylocentrotus purpuratus (Purple sea urchin)).